We begin with the raw amino-acid sequence, 316 residues long: Mycothiol acetyltransferase (316 aa).

2 N-acetyltransferase domains span residues 16–153 (REVR…VPAV) and 156–316 (VRIR…PAAN). E36 contributes to the 1D-myo-inositol 2-(L-cysteinylamino)-2-deoxy-alpha-D-glucopyranoside binding site. Residues 83 to 85 (LVV) and 91 to 96 (RRGIGS) contribute to the acetyl-CoA site. Positions 183, 228, and 238 each coordinate 1D-myo-inositol 2-(L-cysteinylamino)-2-deoxy-alpha-D-glucopyranoside. Residues 242 to 244 (VGV) and 249 to 255 (QGRGLGQ) each bind acetyl-CoA. Residue Y283 coordinates 1D-myo-inositol 2-(L-cysteinylamino)-2-deoxy-alpha-D-glucopyranoside. 288-293 (NVAAVR) lines the acetyl-CoA pocket.

Belongs to the acetyltransferase family. MshD subfamily. Monomer.

It catalyses the reaction 1D-myo-inositol 2-(L-cysteinylamino)-2-deoxy-alpha-D-glucopyranoside + acetyl-CoA = mycothiol + CoA + H(+). Its function is as follows. Catalyzes the transfer of acetyl from acetyl-CoA to desacetylmycothiol (Cys-GlcN-Ins) to form mycothiol. The protein is Mycothiol acetyltransferase of Mycolicibacterium paratuberculosis (strain ATCC BAA-968 / K-10) (Mycobacterium paratuberculosis).